A 429-amino-acid polypeptide reads, in one-letter code: MFCTINQKAVQPAKPSDTTTPQYPADFFNKNNHQKPTVRVTQRGYKIQELREIISNGIVQDDLNSHHVVRYMELIMEDITDTLDEDWNSFGVKIGRKGDKITPLSLVNVMIEEDELIDGKRNNGVNKKDDKWIMLVITSYYRFAFSQNQNHRSNLITKLNLQLRTFLKDPPTIVDNMGLFTSLISNINFTKLISALDMFLNRFKNNDWSYLRFGTIASRYKDCSALMSLSHVCDVTGMKMEEFMDWIFVYSTGEDMIKLMKEGNEIDNPMSYMPYTMSMGLSTKSPYSSINCPSIYSFIHMLGSFLGSERSRNARMVSENNIVNLKVNAGVVSYVKSHRASMIKAFISNDVKEQWYNNDDNDNENGGDDESDEELDEMPKGDNPVEWFMYLESRHFELPEEIKNFMNREARKITNPRVGTIGKFVSTMN.

Residues 355–378 are disordered; it reads WYNNDDNDNENGGDDESDEELDEM. Over residues 359 to 376 the composition is skewed to acidic residues; it reads DDNDNENGGDDESDEELD.

The protein belongs to the ephemerovirus nucleocapsid protein family. As to quaternary structure, homomultimerizes to form the nucleocapsid. Binds to viral genomic RNA.

It localises to the virion. The protein localises to the host cytoplasm. Its function is as follows. Encapsidates the genome, protecting it from nucleases. If expressed without protein P it binds non-specifically RNA and therefore can bind it's own mRNA. Interaction with protein P abolishes any non-specific RNA binding, and prevents phosphorylation. The soluble N-P complex encapsidates specifically the genomic RNA, with protein N protecting the genome like a pearl necklace. The encapsidated genomic RNA is termed the nucleocapsid (NC) and serves as template for viral transcription and replication. Protein N binds protein P in the NC through a different interaction, and can be phosphorylated. Subsequent viral replication is dependent on intracellular concentration of newly synthesized protein N. During replication, encapsidation by protein N is coupled to RNA synthesis and all replicative products are resistant to nucleases. This chain is Nucleoprotein (N), found in Adelaide River virus (ARV).